Here is a 121-residue protein sequence, read N- to C-terminus: Large ribosomal subunit protein uL14 (121 aa).

It belongs to the universal ribosomal protein uL14 family. As to quaternary structure, part of the 50S ribosomal subunit. Forms a cluster with proteins L3 and L19. In the 70S ribosome, L14 and L19 interact and together make contacts with the 16S rRNA in bridges B5 and B8.

Its function is as follows. Binds to 23S rRNA. Forms part of two intersubunit bridges in the 70S ribosome. This Legionella pneumophila (strain Paris) protein is Large ribosomal subunit protein uL14.